We begin with the raw amino-acid sequence, 184 residues long: Ras-related protein Rap-1b (184 aa).

10-18 (GSGGVGKSA) serves as a coordination point for GTP. Residues 25-67 (QGIFVEKYDPTIEDSYRKQVEVDAQQCMLEILDTAGTEQFTAM) are interaction with KRIT1. The short motif at 32–40 (YDPTIEDSY) is the Effector region element. Residues 57–61 (DTAGT), 116–119 (NKCD), and 147–149 (SAK) each bind GTP. Phosphoserine; by PKA is present on Ser-179. Cys-181 carries the cysteine methyl ester modification. The S-geranylgeranyl cysteine moiety is linked to residue Cys-181. The propeptide at 182–184 (QLL) is removed in mature form.

Heterodimer with RAP1GAP. Interacts with EPAC2. Interacts with SGSM1. Interacts with SGSM2. Interacts with SGSM3. Interacts with KRIT1. Interacts with RAP1GDS1.

It localises to the cell membrane. The protein resides in the cytoplasm. It is found in the cytosol. Its subcellular location is the cell junction. It carries out the reaction GTP + H2O = GDP + phosphate + H(+). With respect to regulation, activated by guanine nucleotide-exchange factor (GEF) EPAC2 in a cAMP-dependent manner. Its function is as follows. GTP-binding protein that possesses intrinsic GTPase activity. Contributes to the polarizing activity of KRIT1 and CDH5 in the establishment and maintenance of correct endothelial cell polarity and vascular lumen. Required for the localization of phosphorylated PRKCZ, PARD3 and TIAM1 to the cell junction. Plays a role in the establishment of basal endothelial barrier function. The chain is Ras-related protein Rap-1b (RAP1B) from Bos taurus (Bovine).